Here is a 294-residue protein sequence, read N- to C-terminus: Lipoprotein NlpI (294 aa).

A signal peptide spans 1–18; it reads MKPFLRWCFVATALTLAG. Residue Cys19 is the site of N-palmitoyl cysteine attachment. The S-diacylglycerol cysteine moiety is linked to residue Cys19. TPR repeat units lie at residues 62-95, 96-129, and 234-267; these read AQLLYERGVLYDSLGLRALARNDFSQALAIRPDM, PEVFNYLGIYLTQAGNFDAAYEAFDSVLELDPTY, and SETNFYLGKYYLSLGDLDSATALFKLAVANNVHN.

As to quaternary structure, homodimer.

Its subcellular location is the cell membrane. In terms of biological role, may be involved in cell division. May play a role in bacterial septation or regulation of cell wall degradation during cell division. This Escherichia coli O157:H7 protein is Lipoprotein NlpI (nlpI).